Consider the following 320-residue polypeptide: Cytochrome f (320 aa).

The first 35 residues, 1–35 (MENRKTFSWLKEQMIRSISVSIMIYVITRTSISNA), serve as a signal peptide directing secretion. Heme-binding residues include Tyr-36, Cys-56, Cys-59, and His-60. A helical membrane pass occupies residues 286–306 (VQGLLFFFASVILAQVFLVLK).

Belongs to the cytochrome f family. The 4 large subunits of the cytochrome b6-f complex are cytochrome b6, subunit IV (17 kDa polypeptide, petD), cytochrome f and the Rieske protein, while the 4 small subunits are PetG, PetL, PetM and PetN. The complex functions as a dimer. Heme is required as a cofactor.

Its subcellular location is the plastid. It is found in the chloroplast thylakoid membrane. In terms of biological role, component of the cytochrome b6-f complex, which mediates electron transfer between photosystem II (PSII) and photosystem I (PSI), cyclic electron flow around PSI, and state transitions. This chain is Cytochrome f, found in Saccharum hybrid (Sugarcane).